The primary structure comprises 144 residues: Small ribosomal subunit protein bS6 (144 aa).

The interval 97–144 is disordered; it reads EEGPSAMMRKADRDRERDERGGPREGGFRSERGPRRPREEETTASVEE. Positions 105–137 are enriched in basic and acidic residues; it reads RKADRDRERDERGGPREGGFRSERGPRRPREEE.

This sequence belongs to the bacterial ribosomal protein bS6 family.

Binds together with bS18 to 16S ribosomal RNA. The polypeptide is Small ribosomal subunit protein bS6 (Afipia carboxidovorans (strain ATCC 49405 / DSM 1227 / KCTC 32145 / OM5) (Oligotropha carboxidovorans)).